The primary structure comprises 126 residues: Glycine cleavage system H protein (126 aa).

Positions 24 to 105 (TLTVGITDHA…AYGVWLFKIK (82 aa)) constitute a Lipoyl-binding domain. K65 carries the N6-lipoyllysine modification.

It belongs to the GcvH family. As to quaternary structure, the glycine cleavage system is composed of four proteins: P, T, L and H. It depends on (R)-lipoate as a cofactor.

Its function is as follows. The glycine cleavage system catalyzes the degradation of glycine. The H protein shuttles the methylamine group of glycine from the P protein to the T protein. The chain is Glycine cleavage system H protein from Burkholderia cenocepacia (strain ATCC BAA-245 / DSM 16553 / LMG 16656 / NCTC 13227 / J2315 / CF5610) (Burkholderia cepacia (strain J2315)).